We begin with the raw amino-acid sequence, 417 residues long: FK506-binding protein 3 (417 aa).

2 disordered regions span residues 42–129 (SLDD…LSPE) and 191–307 (EGCG…DKPK). Composition is skewed to acidic residues over residues 61-84 (FDDE…EESE), 99-120 (SEEE…EFEE), and 197-222 (CACD…DASD). Composition is skewed to basic and acidic residues over residues 236-249 (ANEK…EPKA) and 256-307 (DQKD…DKPK). Positions 331-417 (GARVGMRYIG…TFDVKLVSLK (87 aa)) constitute a PPIase FKBP-type domain.

It belongs to the FKBP-type PPIase family. FKBP3/4 subfamily.

The protein resides in the nucleus. It is found in the nucleolus. It carries out the reaction [protein]-peptidylproline (omega=180) = [protein]-peptidylproline (omega=0). Its activity is regulated as follows. Inhibited by both FK506 and rapamycin. PPIases accelerate the folding of proteins. It catalyzes the cis-trans isomerization of proline imidic peptide bonds in oligopeptides. The polypeptide is FK506-binding protein 3 (FPR3) (Eremothecium gossypii (strain ATCC 10895 / CBS 109.51 / FGSC 9923 / NRRL Y-1056) (Yeast)).